The sequence spans 418 residues: Tryptophan synthase beta chain (418 aa).

A compositionally biased stretch (polar residues) spans methionine 1–glutamine 17. The tract at residues methionine 1–glycine 23 is disordered. Lysine 111 carries the post-translational modification N6-(pyridoxal phosphate)lysine.

Belongs to the TrpB family. Tetramer of two alpha and two beta chains. Pyridoxal 5'-phosphate is required as a cofactor.

It catalyses the reaction (1S,2R)-1-C-(indol-3-yl)glycerol 3-phosphate + L-serine = D-glyceraldehyde 3-phosphate + L-tryptophan + H2O. Its pathway is amino-acid biosynthesis; L-tryptophan biosynthesis; L-tryptophan from chorismate: step 5/5. Functionally, the beta subunit is responsible for the synthesis of L-tryptophan from indole and L-serine. In Synechococcus sp. (strain CC9605), this protein is Tryptophan synthase beta chain.